Reading from the N-terminus, the 871-residue chain is Coatomer subunit gamma-2 (871 aa).

Basic and acidic residues predominate over residues 1-11 (MIKKFDKKDEE). The disordered stretch occupies residues 1 to 21 (MIKKFDKKDEESGSGSNPFQH). HEAT repeat units lie at residues 64–101 (TEAT…ISED), 283–320 (RELA…KHPS), 321–355 (AVTA…GSES), 356–392 (SVDR…KYPR), 395–430 (SVMM…ENPE), and 467–504 (PVPS…QNES). Thr-594 bears the Phosphothreonine mark.

This sequence belongs to the COPG family. In terms of assembly, oligomeric complex. Binds to CDC42. Interacts with JAGN1. Interacts with TMED10 (via cytoplasmic domain).

It localises to the cytoplasm. It is found in the cytosol. The protein resides in the golgi apparatus membrane. Its subcellular location is the cytoplasmic vesicle. The protein localises to the COPI-coated vesicle membrane. Its function is as follows. The coatomer is a cytosolic protein complex that binds to dilysine motifs and reversibly associates with Golgi non-clathrin-coated vesicles, which further mediate biosynthetic protein transport from the ER, via the Golgi up to the trans Golgi network. Coatomer complex is required for budding from Golgi membranes, and is essential for the retrograde Golgi-to-ER transport of dilysine-tagged proteins. In mammals, the coatomer can only be recruited by membranes associated to ADP-ribosylation factors (ARFs), which are small GTP-binding proteins; the complex also influences the Golgi structural integrity, as well as the processing, activity, and endocytic recycling of LDL receptors. In Homo sapiens (Human), this protein is Coatomer subunit gamma-2 (COPG2).